Here is a 434-residue protein sequence, read N- to C-terminus: Serine hydroxymethyltransferase (434 aa).

Residues L133 and 137-139 (GHL) contribute to the (6S)-5,6,7,8-tetrahydrofolate site. K242 is modified (N6-(pyridoxal phosphate)lysine).

The protein belongs to the SHMT family. Homodimer. Requires pyridoxal 5'-phosphate as cofactor.

It localises to the cytoplasm. It catalyses the reaction (6R)-5,10-methylene-5,6,7,8-tetrahydrofolate + glycine + H2O = (6S)-5,6,7,8-tetrahydrofolate + L-serine. The protein operates within one-carbon metabolism; tetrahydrofolate interconversion. Its pathway is amino-acid biosynthesis; glycine biosynthesis; glycine from L-serine: step 1/1. Its function is as follows. Catalyzes the reversible interconversion of serine and glycine with tetrahydrofolate (THF) serving as the one-carbon carrier. This reaction serves as the major source of one-carbon groups required for the biosynthesis of purines, thymidylate, methionine, and other important biomolecules. Also exhibits THF-independent aldolase activity toward beta-hydroxyamino acids, producing glycine and aldehydes, via a retro-aldol mechanism. This chain is Serine hydroxymethyltransferase, found in Caulobacter sp. (strain K31).